Here is a 1120-residue protein sequence, read N- to C-terminus: Probable leucine-rich repeat receptor-like protein kinase At1g35710 (1120 aa).

The first 29 residues, 1-29 (MGFAEKNLYDFRFLLFISIILSCSISASA), serve as a signal peptide directing secretion. Residues 30-783 (TIAEANALLK…RELKKPKKNG (754 aa)) are Extracellular-facing. 4 N-linked (GlcNAc...) asparagine glycosylation sites follow: N46, N60, N83, and N124. LRR repeat units lie at residues 78–100 (SIEE…PFIS), 103–125 (NLAY…FGNL), 127–150 (KLIY…GNLK), 151–172 (NLTV…ELGN), 175–198 (SMTD…GNLK), 199–221 (NLMV…LGNM), 223–246 (SMTD…GNLK), 247–269 (NLMV…IGNM), 271–294 (SMTN…GNLK), 295–317 (NLTL…LGNI), 319–342 (SMID…GNLK), 343–365 (NLTI…LGNM), 367–389 (SMID…FGNL), 391–412 (NLTY…ELGN), 415–437 (SMIN…FGNF), 439–461 (KLES…VANS), 463–484 (HLTT…TVCK), 487–510 (KLQN…RDCK), 535–557 (DLNF…WEKS), 559–581 (KLGA…IWNM), 583–605 (QLVE…IGNL), 607–630 (NLSR…SFLT), 631–652 (NLES…TFDS), 655–677 (KLHD…SKLT), 678–701 (QLTQ…SSLQ), 702–723 (SLDK…TFEG), and 726–748 (ALTN…PTFR). Residue N151 is glycosylated (N-linked (GlcNAc...) asparagine). A glycan (N-linked (GlcNAc...) asparagine) is linked at N295. N343 carries N-linked (GlcNAc...) asparagine glycosylation. 5 N-linked (GlcNAc...) asparagine glycosylation sites follow: N391, N436, N460, N473, and N490. N569, N580, N604, N607, N641, and N660 each carry an N-linked (GlcNAc...) asparagine glycan. N-linked (GlcNAc...) asparagine glycosylation occurs at N712. A helical membrane pass occupies residues 784–804 (NLVVWILVPILGVLVILSICA). Residues 805 to 1120 (NTFTYCIRKR…TMLSISTTFS (316 aa)) are Cytoplasmic-facing. T848 carries the post-translational modification Phosphothreonine. One can recognise a Protein kinase domain in the interval 851-1120 (FDPTHLIGTG…TMLSISTTFS (270 aa)). ATP is bound by residues 857-865 (IGTGGYSKV) and K878. Phosphotyrosine occurs at positions 929 and 968. Residue D981 is the Proton acceptor of the active site. S1014 carries the post-translational modification Phosphoserine. Phosphotyrosine is present on residues Y1022 and Y1029. T1030 carries the post-translational modification Phosphothreonine.

It belongs to the protein kinase superfamily. Ser/Thr protein kinase family.

Its subcellular location is the membrane. The enzyme catalyses L-seryl-[protein] + ATP = O-phospho-L-seryl-[protein] + ADP + H(+). It catalyses the reaction L-threonyl-[protein] + ATP = O-phospho-L-threonyl-[protein] + ADP + H(+). The protein is Probable leucine-rich repeat receptor-like protein kinase At1g35710 of Arabidopsis thaliana (Mouse-ear cress).